Reading from the N-terminus, the 77-residue chain is Acyl carrier protein (77 aa).

One can recognise a Carrier domain in the interval 2 to 77 (SAIDKRVKEI…DAIDYITEHT (76 aa)). Ser37 is subject to O-(pantetheine 4'-phosphoryl)serine.

Belongs to the acyl carrier protein (ACP) family. 4'-phosphopantetheine is transferred from CoA to a specific serine of apo-ACP by AcpS. This modification is essential for activity because fatty acids are bound in thioester linkage to the sulfhydryl of the prosthetic group.

The protein localises to the cytoplasm. Its pathway is lipid metabolism; fatty acid biosynthesis. Carrier of the growing fatty acid chain in fatty acid biosynthesis. The chain is Acyl carrier protein from Geobacter metallireducens (strain ATCC 53774 / DSM 7210 / GS-15).